The primary structure comprises 315 residues: Probable inactive acetaldehyde dehydrogenase 1 (315 aa).

NAD(+)-binding positions include 14–17 (SGDV) and Asn-288.

The protein belongs to the acetaldehyde dehydrogenase family.

The chain is Probable inactive acetaldehyde dehydrogenase 1 from Mycolicibacterium vanbaalenii (strain DSM 7251 / JCM 13017 / BCRC 16820 / KCTC 9966 / NRRL B-24157 / PYR-1) (Mycobacterium vanbaalenii).